A 484-amino-acid chain; its full sequence is MAAVGDHGSPDSYRSPLASRYASPEMCFVFSDRYKFRTWRQLWLWLAEAEQTLGLPITDEQIQEMKSNLDNIDFKMAAEEEKRLRHDVMAHVHTFGHCCPKAAGIIHLGATSCYVGDNTDLIILRNALDLLLPKLARVISRLADFAKERASLPTLGFTHFQPAQLTTVGKRCCLWIQDLCMDLQNLKRVRDDLRFRGVKGTTGTQASFLQLFEGDDHKVEQLDKMVTDKAGFKRAFIITGQTYTRKVDIEVLSVLASLGASVHKICTDIRLLANLKEMEEPFEKQQIGSSAMPYKRNPMRSERCCSLARHLMTLVMDPLQTASVQWFERTLDDSANRRICLAEAFLTADTILNTLQNISEGLVVYPKVIERRIRQELPFMATENIIMAMVKAGGSRQDCHEKIRVLSQQAASVVKQEGGDNDLIERIQADAYFSPIHSQLDRLLDPSSFTGRASQQVQRFLEEEVYPLLKPYESVMKVKAELCL.

Residue alanine 2 is modified to N-acetylalanine. Residues 20–21 (RY), 85–87 (RHD), and 111–112 (TS) each bind substrate. An N6-acetyllysine modification is found at lysine 147. Histidine 159 serves as the catalytic Proton donor/acceptor. Glutamine 241 serves as a coordination point for substrate. Catalysis depends on serine 289, which acts as the Proton donor/acceptor. Lysine 295 carries the post-translational modification N6-acetyllysine. Positions 303, 329, 334, and 338 each coordinate substrate. Lysine 415 participates in a covalent cross-link: Glycyl lysine isopeptide (Lys-Gly) (interchain with G-Cter in SUMO1).

Belongs to the lyase 1 family. Adenylosuccinate lyase subfamily. Homotetramer. Residues from neighboring subunits contribute catalytic and substrate-binding residues to each active site.

It catalyses the reaction N(6)-(1,2-dicarboxyethyl)-AMP = fumarate + AMP. It carries out the reaction (2S)-2-[5-amino-1-(5-phospho-beta-D-ribosyl)imidazole-4-carboxamido]succinate = 5-amino-1-(5-phospho-beta-D-ribosyl)imidazole-4-carboxamide + fumarate. It functions in the pathway purine metabolism; AMP biosynthesis via de novo pathway; AMP from IMP: step 2/2. Its pathway is purine metabolism; IMP biosynthesis via de novo pathway; 5-amino-1-(5-phospho-D-ribosyl)imidazole-4-carboxamide from 5-amino-1-(5-phospho-D-ribosyl)imidazole-4-carboxylate: step 2/2. Its function is as follows. Catalyzes two non-sequential steps in de novo AMP synthesis: converts (S)-2-(5-amino-1-(5-phospho-D-ribosyl)imidazole-4-carboxamido)succinate (SAICAR) to fumarate plus 5-amino-1-(5-phospho-D-ribosyl)imidazole-4-carboxamide, and thereby also contributes to de novo IMP synthesis, and converts succinyladenosine monophosphate (SAMP) to AMP and fumarate. This Macaca fascicularis (Crab-eating macaque) protein is Adenylosuccinate lyase (ADSL).